Here is a 63-residue protein sequence, read N- to C-terminus: Hypoxia-inducible lipid droplet-associated protein (63 aa).

Residues 1–37 (MKHVLNLYLLGVVLTLLSIFVRVMESLEGLLESPSPG) are required for targeting to lipid droplets. The helical transmembrane segment at 7 to 23 (LYLLGVVLTLLSIFVRV) threads the bilayer. The segment at 31–63 (LESPSPGTSWTTRSQLANTEPTKGLPDHPSRSM) is disordered. Over residues 35–51 (SPGTSWTTRSQLANTEP) the composition is skewed to polar residues. Residue Ser-44 is modified to Phosphoserine.

As to expression, highly expressed in renal cell carcinoma cells but barely detectable in adjacent normal kidney tissue. Detected in some cervical and endometrial cancers. Expression also detected in fetal kidney with little or no expression observed in normal adult heart, liver, lung, pancreas, prostate or spinal cord (at protein level).

It is found in the lipid droplet. The protein resides in the secreted. The protein localises to the membrane. Its function is as follows. Increases intracellular lipid accumulation. Stimulates expression of cytokines including IL6, MIF and VEGFA. Enhances cell growth and proliferation. The chain is Hypoxia-inducible lipid droplet-associated protein (HILPDA) from Homo sapiens (Human).